The following is a 251-amino-acid chain: Pyridoxine 5'-phosphate synthase (251 aa).

Asn-7 lines the 3-amino-2-oxopropyl phosphate pocket. A 1-deoxy-D-xylulose 5-phosphate-binding site is contributed by 9-10 (DH). Arg-18 lines the 3-amino-2-oxopropyl phosphate pocket. The active-site Proton acceptor is the His-43. The 1-deoxy-D-xylulose 5-phosphate site is built by Arg-45 and His-50. The active-site Proton acceptor is the Glu-70. Thr-100 serves as a coordination point for 1-deoxy-D-xylulose 5-phosphate. His-198 functions as the Proton donor in the catalytic mechanism. 3-amino-2-oxopropyl phosphate is bound by residues Ala-199 and 220–221 (GH).

Belongs to the PNP synthase family. As to quaternary structure, homooctamer; tetramer of dimers.

It is found in the cytoplasm. The catalysed reaction is 3-amino-2-oxopropyl phosphate + 1-deoxy-D-xylulose 5-phosphate = pyridoxine 5'-phosphate + phosphate + 2 H2O + H(+). Its pathway is cofactor biosynthesis; pyridoxine 5'-phosphate biosynthesis; pyridoxine 5'-phosphate from D-erythrose 4-phosphate: step 5/5. Catalyzes the complicated ring closure reaction between the two acyclic compounds 1-deoxy-D-xylulose-5-phosphate (DXP) and 3-amino-2-oxopropyl phosphate (1-amino-acetone-3-phosphate or AAP) to form pyridoxine 5'-phosphate (PNP) and inorganic phosphate. This chain is Pyridoxine 5'-phosphate synthase, found in Aromatoleum aromaticum (strain DSM 19018 / LMG 30748 / EbN1) (Azoarcus sp. (strain EbN1)).